A 1400-amino-acid polypeptide reads, in one-letter code: DNA-directed RNA polymerase subunit beta' (1400 aa).

Cys70, Cys72, Cys85, and Cys88 together coordinate Zn(2+). Positions 460, 462, and 464 each coordinate Mg(2+). The Zn(2+) site is built by Cys814, Cys888, Cys895, and Cys898.

It belongs to the RNA polymerase beta' chain family. In terms of assembly, the RNAP catalytic core consists of 2 alpha, 1 beta, 1 beta' and 1 omega subunit. When a sigma factor is associated with the core the holoenzyme is formed, which can initiate transcription. It depends on Mg(2+) as a cofactor. The cofactor is Zn(2+).

The enzyme catalyses RNA(n) + a ribonucleoside 5'-triphosphate = RNA(n+1) + diphosphate. In terms of biological role, DNA-dependent RNA polymerase catalyzes the transcription of DNA into RNA using the four ribonucleoside triphosphates as substrates. This Vibrio vulnificus (strain CMCP6) protein is DNA-directed RNA polymerase subunit beta'.